Here is a 142-residue protein sequence, read N- to C-terminus: Universal stress protein C (142 aa).

It belongs to the universal stress protein A family.

The protein localises to the cytoplasm. Functionally, required for resistance to DNA-damaging agents. This Escherichia coli (strain K12) protein is Universal stress protein C (uspC).